An 873-amino-acid polypeptide reads, in one-letter code: Serine/threonine-protein phosphatase 4 regulatory subunit 4 (873 aa).

HEAT repeat units lie at residues 213 to 251, 252 to 290, and 392 to 427; these read ILPL…TKSV, VLPE…RSQT, and NFHM…SKLL. Residues 686 to 720 are a coiled coil; the sequence is QKKFYEKDLLDQEKEREELLLLEMEQLEKEKQQND. Positions 713–737 are enriched in basic and acidic residues; sequence EKEKQQNDGRPMSDKMFEKKRRDTK. Positions 713–766 are disordered; it reads EKEKQQNDGRPMSDKMFEKKRRDTKTPTQSLPKNIPISVPGPSSVTPSTSKEIK. The segment covering 747 to 762 has biased composition (low complexity); sequence IPISVPGPSSVTPSTS. S775 bears the Phosphoserine mark. At T797 the chain carries Phosphothreonine. Residues 822-858 are compositionally biased toward polar residues; that stretch reads TRNASSVPSSFSPNTPLPSTSRGTGNSVDPKSSGSKD. Positions 822–873 are disordered; the sequence is TRNASSVPSSFSPNTPLPSTSRGTGNSVDPKSSGSKDTQPRKATLKSRKSNP. Residues 864–873 show a composition bias toward basic residues; sequence ATLKSRKSNP.

As to quaternary structure, serine/threonine-protein phosphatase 4 (PP4) occurs in different assemblies of the catalytic and one or more regulatory subunits. Component of the PP4 complex PPP4C-PPP4R4.

It is found in the cytoplasm. In terms of biological role, putative regulatory subunit of serine/threonine-protein phosphatase 4. This Homo sapiens (Human) protein is Serine/threonine-protein phosphatase 4 regulatory subunit 4 (PPP4R4).